Consider the following 805-residue polypeptide: Sucrose synthase (805 aa).

Residues Met-275 to Thr-752 are GT-B glycosyltransferase.

It belongs to the glycosyltransferase 1 family. Plant sucrose synthase subfamily. Expression is at least 10-fold higher in tubers compared to photosynthetically active tissues.

It carries out the reaction an NDP-alpha-D-glucose + D-fructose = a ribonucleoside 5'-diphosphate + sucrose + H(+). In terms of biological role, sucrose-cleaving enzyme that provides UDP-glucose and fructose for various metabolic pathways. This is Sucrose synthase from Solanum tuberosum (Potato).